Consider the following 277-residue polypeptide: Phosphate import ATP-binding protein PstB (277 aa).

The region spanning 31 to 272 (LEVPGLNLFY…PAKKQTEDYI (242 aa)) is the ABC transporter domain. Position 63 to 70 (63 to 70 (GPSGCGKS)) interacts with ATP.

This sequence belongs to the ABC transporter superfamily. Phosphate importer (TC 3.A.1.7) family. The complex is composed of two ATP-binding proteins (PstB), two transmembrane proteins (PstC and PstA) (Potential). PstS is missing in this species.

It is found in the cell inner membrane. The enzyme catalyses phosphate(out) + ATP + H2O = ADP + 2 phosphate(in) + H(+). Functionally, part of the ABC transporter complex PstSACB involved in phosphate import. Responsible for energy coupling to the transport system. This Pseudomonas aeruginosa (strain ATCC 15692 / DSM 22644 / CIP 104116 / JCM 14847 / LMG 12228 / 1C / PRS 101 / PAO1) protein is Phosphate import ATP-binding protein PstB.